We begin with the raw amino-acid sequence, 785 residues long: Endonuclease MutS2 (785 aa).

An ATP-binding site is contributed by 335-342 (GPNTGGKT). The 76-residue stretch at 710 to 785 (LDLRGERYEN…GSGVTIVELK (76 aa)) folds into the Smr domain.

This sequence belongs to the DNA mismatch repair MutS family. MutS2 subfamily. Homodimer. Binds to stalled ribosomes, contacting rRNA.

Its function is as follows. Endonuclease that is involved in the suppression of homologous recombination and thus may have a key role in the control of bacterial genetic diversity. Acts as a ribosome collision sensor, splitting the ribosome into its 2 subunits. Detects stalled/collided 70S ribosomes which it binds and splits by an ATP-hydrolysis driven conformational change. Acts upstream of the ribosome quality control system (RQC), a ribosome-associated complex that mediates the extraction of incompletely synthesized nascent chains from stalled ribosomes and their subsequent degradation. Probably generates substrates for RQC. This Bacillus velezensis (strain DSM 23117 / BGSC 10A6 / LMG 26770 / FZB42) (Bacillus amyloliquefaciens subsp. plantarum) protein is Endonuclease MutS2.